Here is a 303-residue protein sequence, read N- to C-terminus: Protoheme IX farnesyltransferase (303 aa).

8 consecutive transmembrane segments (helical) span residues methionine 25–leucine 45, isoleucine 54–leucine 74, leucine 104–isoleucine 124, proline 125–serine 145, tryptophan 151–isoleucine 171, alanine 179–isoleucine 199, valine 228–isoleucine 248, and phenylalanine 280–isoleucine 300.

This sequence belongs to the UbiA prenyltransferase family. Protoheme IX farnesyltransferase subfamily. As to quaternary structure, interacts with CtaA.

The protein localises to the cell membrane. It carries out the reaction heme b + (2E,6E)-farnesyl diphosphate + H2O = Fe(II)-heme o + diphosphate. It functions in the pathway porphyrin-containing compound metabolism; heme O biosynthesis; heme O from protoheme: step 1/1. Its function is as follows. Converts heme B (protoheme IX) to heme O by substitution of the vinyl group on carbon 2 of heme B porphyrin ring with a hydroxyethyl farnesyl side group. This Staphylococcus carnosus (strain TM300) protein is Protoheme IX farnesyltransferase.